Consider the following 11197-residue polypeptide: Nonribosomal peptide synthetase 5 (11197 aa).

Residues 19–413 (AQRARKQPDA…DGTLQVVGHK (395 aa)) form an adenylation (A) domain 1 region. Residues 426–452 (HASSSASSVGETPGVTGPISTPMGDSV) are disordered. A condensation (C) domain 1 region spans residues 690–897 (KQLRQFCQEQ…LMDESMKQQI (208 aa)). Residues 918–1310 (DAAQDYPDAP…GRHDGQLKVR (393 aa)) are adenylation (A) domain 2. Positions 1446–1522 (ADRSPVHMML…DMANNIAISE (77 aa)) constitute a Carrier 1 domain. Residue Ser-1483 is modified to O-(pantetheine 4'-phosphoryl)serine. A condensation (C) domain 2 region spans residues 1952–2380 (VEDVYPCSPV…SDISLMDPLS (429 aa)). The tract at residues 2406 to 2805 (VARIEPDKMA…QRKDTQIKIR (400 aa)) is adenylation (A) domain 3. The Carrier 2 domain occupies 2945–3021 (DSLTSTEVTI…SLAAFVDYDS (77 aa)). Ser-2982 is modified (O-(pantetheine 4'-phosphoryl)serine). The epimerase (E) domain 1 stretch occupies residues 3041 to 3481 (EESFALSPIQ…TSTMKSEFTL (441 aa)). The interval 3515–3957 (EEIFPCSPMQ…VSPETRCELD (443 aa)) is condensation (C) domain 3. The tract at residues 3976 to 4371 (FEQQVEKIPD…RRRDNQVKVR (396 aa)) is adenylation (A) domain 4. In terms of domain architecture, Carrier 3 spans 4508 to 4584 (RKLTPMEQQL…ELANHARFKA (77 aa)). Ser-4545 is modified (O-(pantetheine 4'-phosphoryl)serine). The epimerase (E) domain 2 stretch occupies residues 4603 to 5022 (FPLLPIQRMF…LNEYTAALRS (420 aa)). Residues 5069–5501 (ESIYPCSPLQ…LVGDSERQGL (433 aa)) form a condensation (C) domain 4 region. Residues 5521 to 5918 (EAQVKAIPDN…RRKDTQVKVR (398 aa)) form an adenylation (A) domain 5 region. The Carrier 4 domain occupies 6068 to 6141 (SEAEDIIRAV…ALAQFVSQST (74 aa)). Ser-6102 carries the post-translational modification O-(pantetheine 4'-phosphoryl)serine. The segment at 6162 to 6512 (FSLSPIQQMF…MEILFNYFGQ (351 aa)) is epimerase (E) domain 3. Residues 6636-7076 (EEIFPCSPIQ…LVGAETRREM (441 aa)) form a condensation (C) domain 5 region. Residues 7097-7491 (ERNSQAMPDR…RRRDNQVKVR (395 aa)) form an adenylation (A) domain 6 region. Residues 7636–7712 (KPKTKMEEHF…DLAGRSRFKN (77 aa)) form the Carrier 5 domain. Residue Ser-7673 is modified to O-(pantetheine 4'-phosphoryl)serine. Residues 7733–8162 (ALLPIQRLFF…KYMLETLASQ (430 aa)) form an epimerase (E) domain 4 region. The condensation (C) domain 6 stretch occupies residues 8205-8638 (EASYPCSPLQ…MLGDSGRKRI (434 aa)). Residues 8660–8832 (EAHVKESPNR…DHRATATEIV (173 aa)) are adenylation (A) domain 7. The region spanning 9173 to 9248 (SAQTAVVQII…AMAAKAQQIG (76 aa)) is the Carrier 6 domain. Ser-9209 carries the O-(pantetheine 4'-phosphoryl)serine modification. The epimerase (E) domain 5 stretch occupies residues 9565–9683 (RVKDMRRAIP…LHEVVSALQK (119 aa)). The tract at residues 9721-10116 (VEDVYPTSPM…LVPAKHMEQL (396 aa)) is condensation (C) domain 7. Residues 10136–10529 (DDMVRSTPTA…VGRKDTQIKI (394 aa)) form an adenylation (A) domain 8 region. Positions 10663–10749 (LDSSDYVAMQ…TLAVTIKADM (87 aa)) constitute a Carrier 7 domain. At Ser-10708 the chain carries O-(pantetheine 4'-phosphoryl)serine. A thioesterase (TE) domain region spans residues 10806–11104 (NFLVTGSTGF…SLRPMSGPEW (299 aa)).

It belongs to the NRP synthetase family.

The protein operates within secondary metabolite biosynthesis. Its function is as follows. Nonribosomal peptide synthetase; part of the Fg3_54/C64 gene cluster that mediates the biosynthesis of the octapeptide fusaoctaxin A, a virulence factor that is required for cell-to-cell invasiveness of plant host. The 2 nonribosomal peptide synthetases NRPS9 and NRPS5 form an assembly line which likely utilizes GABA as a starter unit (loaded on the unique module M1 of NRPS9) and sequentially incorporates seven extender units composed of the residues L-Ala, L-allo-Ile, L-Ser, L-Val, L-Ser, L-Leu and L-Leu, respectively. During the process, each of the residues that are tethered on modules M3-M7 of NRPS5 containing an E domain can undergo an epimerization reaction to produce a D-configuration before the transpeptidation reaction occurs. The elongation of the peptidyl chain might be terminated by module M8-mediated L-Leu incorporation, followed by R domain-catalyzed 4 electron reduction to release the resulting octapeptide from the assembly line as an alcohol. Fusaoctaxin A is cleaved by the cluster specific ABC transporter FGM5 to the pentapeptide fusapentaxin A and the tripeptide fusatrixin A. The other enzymes from the cluster, FGM1, FGM2, FGM3 and FGM9 seem not to be involved in the biosynthesis of fusaoctaxin A and their functions have still to be determined. This is Nonribosomal peptide synthetase 5 from Gibberella zeae (strain ATCC MYA-4620 / CBS 123657 / FGSC 9075 / NRRL 31084 / PH-1) (Wheat head blight fungus).